The chain runs to 151 residues: Probable ubiquitin-conjugating enzyme E2 W-A (151 aa).

Positions 3–151 (SMQKRLQKEL…TKWWYHDDTC (149 aa)) constitute a UBC core domain. The Glycyl thioester intermediate role is filled by Cys91.

Belongs to the ubiquitin-conjugating enzyme family.

Its subcellular location is the nucleus. It catalyses the reaction S-ubiquitinyl-[E1 ubiquitin-activating enzyme]-L-cysteine + [E2 ubiquitin-conjugating enzyme]-L-cysteine = [E1 ubiquitin-activating enzyme]-L-cysteine + S-ubiquitinyl-[E2 ubiquitin-conjugating enzyme]-L-cysteine.. It carries out the reaction S-ubiquitinyl-[E1 ubiquitin-activating enzyme]-L-cysteine + [acceptor protein]-N-terminal-amino acid = [E1 ubiquitin-activating enzyme]-L-cysteine + N-terminal-ubiquitinyl-[acceptor protein].. It participates in protein modification; protein ubiquitination. Its function is as follows. Accepts ubiquitin from the E1 complex and catalyzes its covalent attachment to other proteins. Catalyzes monoubiquitination. Involved in degradation of misfolded chaperone substrate and DNA repair. The protein is Probable ubiquitin-conjugating enzyme E2 W-A (ube2wa) of Danio rerio (Zebrafish).